Consider the following 661-residue polypeptide: MFSRFARSFSSDDRTRKSYDGSYQSFNAGERDLPTPTRDWCSISQRITSERVRDGCLIPTPGEALETAVKALSEKTDSLTSPVLQSTERHSVLLGLHHNNVPESLVVSCMSNDVHDGFMQRYMETIQRCLDDLKLSGDGLWWVYENTYWQYLKYTTGAEVPVTSEKVNKKSKSTVLLFSSVVANKPISRHPFKSKVINSDYRGICQELREALGAVQKYMYFMRPDDPTNPSPDTRIRVQEIAAYTATGYGWMLWFLDVVDARVCRHLKLQFRRIRGPRASVIPDDLLRRHLKTGPAVSAGTGVAFILAATTASALTALLRISVLWRKEEWRDGLNGTAAAIVAAVELITLLHHHFQYLINMMLIGYACWGDGGLNDPYILKALRAQGRFLYFAGQLVRTMSTHSWVVLETSTHMWFSRAVAQSILAHGGKPTKYYAQVLAASKRYTPLHLRRISEPSSVSDQPYIRFNRLGSPIGTGIGNLECVCLTGNYLSDDVNASSHVINTEAPLNSIAPDTNRQRTSRVLVRPDTGLDVTVRKNHCLDIGHTDGSPVDPTYPDHYTRIKAEYEGPVRDESNTMFDQRSDLRHIETQASLNDHVYENIPPKEVGFNSSSDLDVDSLNGYTSGDMHTDDDLSPDFIPNDVPVRCKTTVTFRKNTPKSHH.

The interval 1–31 is disordered; that stretch reads MFSRFARSFSSDDRTRKSYDGSYQSFNAGER. The segment covering 10-19 has biased composition (basic and acidic residues); it reads SSDDRTRKSY. A run of 2 helical transmembrane segments spans residues 299–319 and 339–359; these read AGTGVAFILAATTASALTALL and AAIVAAVELITLLHHHFQYLI.

Belongs to the herpesviridae HHV-1 VP11/12 protein family. In terms of processing, phosphorylated by host LCK. The phosphorylation seems to be lymphocyte-specific.

The protein localises to the virion tegument. It is found in the host cytoplasm. The protein resides in the host membrane. Its function is as follows. Plays a role in the activation of the host PI3K/AKT pathway to promote cell survival. Interacts with and activates PI3KR1 in order to phosphorylate host AKT on its activating residues. Activates the host AP-1 pathway by triggering phosphorylation of host ERK1/2. Participates in host BIM and BAD phosphorylation, leading to apoptosis inhibition. This chain is Tegument protein UL46 homolog, found in Varicella-zoster virus (strain Oka vaccine) (HHV-3).